The sequence spans 132 residues: Small ribosomal subunit protein uS8 (132 aa).

This sequence belongs to the universal ribosomal protein uS8 family. As to quaternary structure, part of the 30S ribosomal subunit. Contacts proteins S5 and S12.

One of the primary rRNA binding proteins, it binds directly to 16S rRNA central domain where it helps coordinate assembly of the platform of the 30S subunit. The chain is Small ribosomal subunit protein uS8 from Maricaulis maris (strain MCS10) (Caulobacter maris).